We begin with the raw amino-acid sequence, 291 residues long: Co-chaperone protein DjlA (291 aa).

The Periplasmic portion of the chain corresponds to 1 to 6 (MRYWGK). The chain crosses the membrane as a helical span at residues 7–31 (LLGLALGIVSSTGIWGMIMGLLMGH). Residues 32–291 (WIDRARASRR…ELLKSANQTK (260 aa)) are Cytoplasmic-facing. The interval 177–223 (ESPTGQQSRQNQSRQNGKSQQRRNNGYSNGHSYGGQRPPSPLRGPTV) is disordered. Residues 181 to 211 (GQQSRQNQSRQNGKSQQRRNNGYSNGHSYGG) are compositionally biased toward low complexity. Positions 225–291 (SACRTLGVRS…ELLKSANQTK (67 aa)) constitute a J domain.

Homodimer.

It localises to the cell inner membrane. Functionally, regulatory DnaK co-chaperone. Direct interaction between DnaK and DjlA is needed for the induction of the wcaABCDE operon, involved in the synthesis of a colanic acid polysaccharide capsule, possibly through activation of the RcsB/RcsC phosphotransfer signaling pathway. The colanic acid capsule may help the bacterium survive conditions outside the host. The polypeptide is Co-chaperone protein DjlA (Pectobacterium atrosepticum (strain SCRI 1043 / ATCC BAA-672) (Erwinia carotovora subsp. atroseptica)).